A 402-amino-acid chain; its full sequence is Plasminogen activator inhibitor 1 (402 aa).

An N-terminal signal peptide occupies residues M1 to A23. 3 N-linked (GlcNAc...) asparagine glycosylation sites follow: N232, N288, and N352.

Belongs to the serpin family. In terms of assembly, forms a heterodimer with TMPRSS7. Interacts with VTN. Binds LRP1B; binding is followed by internalization and degradation. Interacts with PPP1CB. In complex with PLAU/uPA, interacts with PLAUR/uPAR. Interacts with SORL1 and LRP1, either alone or in complex with PLAU; these interactions are abolished in the presence of LRPAP1/RAP. The ternary complex composed of PLAUR-PLAU-PAI1 also interacts with SORL1. Interacts with PLAT/tPA. Also interacts with SORL1, when complexed to PLAT/tPA. As to expression, vascular endothelial cells may be the primary site of synthesis of plasma PAI1.

Its subcellular location is the secreted. In terms of biological role, serine protease inhibitor. Inhibits TMPRSS7. Is a primary inhibitor of tissue-type plasminogen activator (PLAT) and urokinase-type plasminogen activator (PLAU). As PLAT inhibitor, it is required for fibrinolysis down-regulation and is responsible for the controlled degradation of blood clots. As PLAU inhibitor, it is involved in the regulation of cell adhesion and spreading. Acts as a regulator of cell migration, independently of its role as protease inhibitor. It is required for stimulation of keratinocyte migration during cutaneous injury repair. It is involved in cellular and replicative senescence. Plays a role in alveolar type 2 cells senescence in the lung. Is involved in the regulation of cementogenic differentiation of periodontal ligament stem cells, and regulates odontoblast differentiation and dentin formation during odontogenesis. This is Plasminogen activator inhibitor 1 (SERPINE1) from Bos taurus (Bovine).